Reading from the N-terminus, the 345-residue chain is Nicotinate-nucleotide--dimethylbenzimidazole phosphoribosyltransferase (345 aa).

Glu312 (proton acceptor) is an active-site residue.

The protein belongs to the CobT family.

The catalysed reaction is 5,6-dimethylbenzimidazole + nicotinate beta-D-ribonucleotide = alpha-ribazole 5'-phosphate + nicotinate + H(+). Its pathway is nucleoside biosynthesis; alpha-ribazole biosynthesis; alpha-ribazole from 5,6-dimethylbenzimidazole: step 1/2. Catalyzes the synthesis of alpha-ribazole-5'-phosphate from nicotinate mononucleotide (NAMN) and 5,6-dimethylbenzimidazole (DMB). The sequence is that of Nicotinate-nucleotide--dimethylbenzimidazole phosphoribosyltransferase from Bacteroides fragilis (strain ATCC 25285 / DSM 2151 / CCUG 4856 / JCM 11019 / LMG 10263 / NCTC 9343 / Onslow / VPI 2553 / EN-2).